The sequence spans 137 residues: Large ribosomal subunit protein bL17 (137 aa).

It belongs to the bacterial ribosomal protein bL17 family. Part of the 50S ribosomal subunit. Contacts protein L32.

The polypeptide is Large ribosomal subunit protein bL17 (Bradyrhizobium sp. (strain BTAi1 / ATCC BAA-1182)).